We begin with the raw amino-acid sequence, 494 residues long: Protein nucleotidyltransferase YdiU (494 aa).

The ATP site is built by G90, G92, R93, K113, D125, G126, R176, and R183. The active-site Proton acceptor is D252. Residues N253 and D262 each coordinate Mg(2+). ATP is bound at residue D262.

It belongs to the SELO family. It depends on Mg(2+) as a cofactor. Mn(2+) is required as a cofactor.

The catalysed reaction is L-seryl-[protein] + ATP = 3-O-(5'-adenylyl)-L-seryl-[protein] + diphosphate. It carries out the reaction L-threonyl-[protein] + ATP = 3-O-(5'-adenylyl)-L-threonyl-[protein] + diphosphate. The enzyme catalyses L-tyrosyl-[protein] + ATP = O-(5'-adenylyl)-L-tyrosyl-[protein] + diphosphate. It catalyses the reaction L-histidyl-[protein] + UTP = N(tele)-(5'-uridylyl)-L-histidyl-[protein] + diphosphate. The catalysed reaction is L-seryl-[protein] + UTP = O-(5'-uridylyl)-L-seryl-[protein] + diphosphate. It carries out the reaction L-tyrosyl-[protein] + UTP = O-(5'-uridylyl)-L-tyrosyl-[protein] + diphosphate. Its function is as follows. Nucleotidyltransferase involved in the post-translational modification of proteins. It can catalyze the addition of adenosine monophosphate (AMP) or uridine monophosphate (UMP) to a protein, resulting in modifications known as AMPylation and UMPylation. This Alkalilimnicola ehrlichii (strain ATCC BAA-1101 / DSM 17681 / MLHE-1) protein is Protein nucleotidyltransferase YdiU.